The chain runs to 268 residues: 4-hydroxy-tetrahydrodipicolinate reductase (268 aa).

NAD(+) is bound by residues 10–15 (GSTGRM), E36, 99–101 (GTT), and 123–126 (APNM). Catalysis depends on H156, which acts as the Proton donor/acceptor. Residue H157 coordinates (S)-2,3,4,5-tetrahydrodipicolinate. The active-site Proton donor is K160. 166-167 (GT) provides a ligand contact to (S)-2,3,4,5-tetrahydrodipicolinate.

This sequence belongs to the DapB family.

It localises to the cytoplasm. It carries out the reaction (S)-2,3,4,5-tetrahydrodipicolinate + NAD(+) + H2O = (2S,4S)-4-hydroxy-2,3,4,5-tetrahydrodipicolinate + NADH + H(+). The catalysed reaction is (S)-2,3,4,5-tetrahydrodipicolinate + NADP(+) + H2O = (2S,4S)-4-hydroxy-2,3,4,5-tetrahydrodipicolinate + NADPH + H(+). It functions in the pathway amino-acid biosynthesis; L-lysine biosynthesis via DAP pathway; (S)-tetrahydrodipicolinate from L-aspartate: step 4/4. Functionally, catalyzes the conversion of 4-hydroxy-tetrahydrodipicolinate (HTPA) to tetrahydrodipicolinate. The protein is 4-hydroxy-tetrahydrodipicolinate reductase of Nitrosomonas eutropha (strain DSM 101675 / C91 / Nm57).